The following is a 289-amino-acid chain: 26S proteasome non-ATPase regulatory subunit 8 (289 aa).

S45 carries the phosphoserine modification. A PCI domain is found at 101–270; the sequence is PSFERYMAQL…QQKPEDTTIP (170 aa). Residue K236 forms a Glycyl lysine isopeptide (Lys-Gly) (interchain with G-Cter in SUMO2) linkage.

Belongs to the proteasome subunit S14 family. As to quaternary structure, component of the 19S proteasome regulatory particle complex. The 26S proteasome consists of a 20S core particle (CP) and two 19S regulatory subunits (RP). The regulatory particle is made of a lid composed of 9 subunits including PSMD8, a base containing 6 ATPases and few additional components. Interacts with DDI2. Interacts with TASOR.

Functionally, component of the 26S proteasome, a multiprotein complex involved in the ATP-dependent degradation of ubiquitinated proteins. This complex plays a key role in the maintenance of protein homeostasis by removing misfolded or damaged proteins, which could impair cellular functions, and by removing proteins whose functions are no longer required. Therefore, the proteasome participates in numerous cellular processes, including cell cycle progression, apoptosis, or DNA damage repair. The chain is 26S proteasome non-ATPase regulatory subunit 8 (PSMD8) from Pongo abelii (Sumatran orangutan).